The chain runs to 325 residues: tRNA dimethylallyltransferase (325 aa).

11 to 18 (GPTASGKS) contributes to the ATP binding site. 13–18 (TASGKS) lines the substrate pocket. 2 interaction with substrate tRNA regions span residues 36 to 39 (DSMQ) and 160 to 164 (QRLIR).

Belongs to the IPP transferase family. In terms of assembly, monomer. The cofactor is Mg(2+).

The enzyme catalyses adenosine(37) in tRNA + dimethylallyl diphosphate = N(6)-dimethylallyladenosine(37) in tRNA + diphosphate. Functionally, catalyzes the transfer of a dimethylallyl group onto the adenine at position 37 in tRNAs that read codons beginning with uridine, leading to the formation of N6-(dimethylallyl)adenosine (i(6)A). The protein is tRNA dimethylallyltransferase of Rickettsia canadensis (strain McKiel).